We begin with the raw amino-acid sequence, 140 residues long: uncharacterized protein (140 aa).

This is an uncharacterized protein from Xylella fastidiosa (strain Temecula1 / ATCC 700964).